The chain runs to 167 residues: MKKLLILLTFVSFVFSKTFYYDVYVFFFRVGEIKIQIDKEKSYAEGKTLESMKWLYSYDFRFYEEKGDMKLYEREKEKVRVFGKDKIYEKKPWIPLLVDYLKTGKVKENNLFKVKKEGNKFIVIPLKSKRVKKIILKDGKVPKEIVIHGKVKIKLKLRKAEDDKGTV.

The chain crosses the membrane as a helical span at residues 5–27; sequence LILLTFVSFVFSKTFYYDVYVFF.

The protein resides in the membrane. This is an uncharacterized protein from Aquifex aeolicus (strain VF5).